The following is a 500-amino-acid chain: Cytochrome P450 71B36 (500 aa).

The helical transmembrane segment at 1-21 threads the bilayer; the sequence is MATILFLSLLFLSCILLAAFT. A heme-binding site is contributed by C440.

It belongs to the cytochrome P450 family. The cofactor is heme.

It localises to the membrane. This Arabidopsis thaliana (Mouse-ear cress) protein is Cytochrome P450 71B36 (CYP71B36).